The following is a 228-amino-acid chain: Probable septum site-determining protein MinC (228 aa).

The protein belongs to the MinC family. In terms of assembly, interacts with MinD and FtsZ.

In terms of biological role, cell division inhibitor that blocks the formation of polar Z ring septums. Rapidly oscillates between the poles of the cell to destabilize FtsZ filaments that have formed before they mature into polar Z rings. Prevents FtsZ polymerization. This is Probable septum site-determining protein MinC from Bacillus cereus (strain G9842).